Reading from the N-terminus, the 31-residue chain is SDIGGSMDYDVVIVGAGGAGLSAAILKQVNP.

Position 11-25 (11-25 (VVIVGAGGAGLSAAI)) interacts with FAD.

In terms of assembly, monomer. It depends on [4Fe-4S] cluster as a cofactor. Requires FAD as cofactor.

The catalysed reaction is a ubiquinone + reduced [electron-transfer flavoprotein] = a ubiquinol + oxidized [electron-transfer flavoprotein] + H(+). Functionally, accepts electrons from ETF and reduces ubiquinone. This chain is Electron transfer flavoprotein-ubiquinone oxidoreductase, found in Paracoccus denitrificans.